The sequence spans 213 residues: Ribonuclease T (213 aa).

The Exonuclease domain occupies 28-202; it reads VVVDVETGGF…YDTEQTARLF (175 aa). Mg(2+)-binding residues include aspartate 31, glutamate 33, histidine 189, and aspartate 194. The active-site Proton donor/acceptor is histidine 189.

It belongs to the RNase T family. In terms of assembly, homodimer. Mg(2+) serves as cofactor.

In terms of biological role, trims short 3' overhangs of a variety of RNA species, leaving a one or two nucleotide 3' overhang. Responsible for the end-turnover of tRNA: specifically removes the terminal AMP residue from uncharged tRNA (tRNA-C-C-A). Also appears to be involved in tRNA biosynthesis. This chain is Ribonuclease T, found in Xanthomonas axonopodis pv. citri (strain 306).